The following is a 601-amino-acid chain: Testis-specific gene 10 protein (601 aa).

Positions 1-10 (MMRSRSKSPR) are enriched in basic residues. 2 disordered regions span residues 1 to 20 (MMRS…RGAN) and 563 to 588 (VSST…DRGL). An interaction with HIF1A region spans residues 459-592 (QMTNERISMQ…SPDRGLDRSL (134 aa)). Positions 563–573 (VSSTMKPNTKC) are enriched in polar residues. The segment covering 574–588 (HSPERAHHRSPDRGL) has biased composition (basic and acidic residues). Residue Ser591 is modified to Phosphoserine.

This sequence belongs to the CEP135/TSGA10 family. As to quaternary structure, interacts with HIF1A. Post-translationally, processed into N-terminal 27-kDa and C-terminal 55-kDa fragments.

It localises to the cytoplasm. The protein localises to the cytoskeleton. It is found in the microtubule organizing center. The protein resides in the centrosome. Its subcellular location is the centriole. In terms of biological role, plays a role in spermatogenesis. When overexpressed, prevents nuclear localization of HIF1A. This chain is Testis-specific gene 10 protein (TSGA10), found in Macaca fascicularis (Crab-eating macaque).